The following is a 228-amino-acid chain: Cytochrome c oxidase subunit 2 (228 aa).

Over 1–14 the chain is Mitochondrial intermembrane; that stretch reads MANHSQLGFQDASS. Residues 15-45 traverse the membrane as a helical segment; sequence PIMEELVEFHDHALIVALAICSLVLYLLAHM. Residues 46–58 are Mitochondrial matrix-facing; it reads LMEKLSSNAVDAQ. Residues 59 to 86 traverse the membrane as a helical segment; sequence EVELIWTILPAIVLVLLALPSLQILYMM. The Mitochondrial intermembrane segment spans residues 87 to 228; that stretch reads DEIDEPDLTL…ETWSSLLSAS (142 aa). Cu cation is bound by residues histidine 160, cysteine 195, glutamate 197, cysteine 199, histidine 203, and methionine 206. A Mg(2+)-binding site is contributed by glutamate 197.

The protein belongs to the cytochrome c oxidase subunit 2 family. In terms of assembly, component of the cytochrome c oxidase (complex IV, CIV), a multisubunit enzyme composed of 14 subunits. The complex is composed of a catalytic core of 3 subunits MT-CO1, MT-CO2 and MT-CO3, encoded in the mitochondrial DNA, and 11 supernumerary subunits COX4I, COX5A, COX5B, COX6A, COX6B, COX6C, COX7A, COX7B, COX7C, COX8 and NDUFA4, which are encoded in the nuclear genome. The complex exists as a monomer or a dimer and forms supercomplexes (SCs) in the inner mitochondrial membrane with NADH-ubiquinone oxidoreductase (complex I, CI) and ubiquinol-cytochrome c oxidoreductase (cytochrome b-c1 complex, complex III, CIII), resulting in different assemblies (supercomplex SCI(1)III(2)IV(1) and megacomplex MCI(2)III(2)IV(2)). Found in a complex with TMEM177, COA6, COX18, COX20, SCO1 and SCO2. Interacts with TMEM177 in a COX20-dependent manner. Interacts with COX20. Interacts with COX16. Cu cation serves as cofactor.

It is found in the mitochondrion inner membrane. It catalyses the reaction 4 Fe(II)-[cytochrome c] + O2 + 8 H(+)(in) = 4 Fe(III)-[cytochrome c] + 2 H2O + 4 H(+)(out). Functionally, component of the cytochrome c oxidase, the last enzyme in the mitochondrial electron transport chain which drives oxidative phosphorylation. The respiratory chain contains 3 multisubunit complexes succinate dehydrogenase (complex II, CII), ubiquinol-cytochrome c oxidoreductase (cytochrome b-c1 complex, complex III, CIII) and cytochrome c oxidase (complex IV, CIV), that cooperate to transfer electrons derived from NADH and succinate to molecular oxygen, creating an electrochemical gradient over the inner membrane that drives transmembrane transport and the ATP synthase. Cytochrome c oxidase is the component of the respiratory chain that catalyzes the reduction of oxygen to water. Electrons originating from reduced cytochrome c in the intermembrane space (IMS) are transferred via the dinuclear copper A center (CU(A)) of subunit 2 and heme A of subunit 1 to the active site in subunit 1, a binuclear center (BNC) formed by heme A3 and copper B (CU(B)). The BNC reduces molecular oxygen to 2 water molecules using 4 electrons from cytochrome c in the IMS and 4 protons from the mitochondrial matrix. This chain is Cytochrome c oxidase subunit 2 (MT-CO2), found in Cairina moschata (Muscovy duck).